Consider the following 72-residue polypeptide: Protein Kish (72 aa).

An N-terminal signal peptide occupies residues 1–26 (MSALFNFRSLLQVILLLICSCSYVHG). Over 27-53 (QWPSLLDRYKNHEVLGAFWKMARVGER) the chain is Lumenal. The chain crosses the membrane as a helical span at residues 54–72 (ASPYVSLACILMAISQFNS).

Belongs to the KISH family.

It localises to the endoplasmic reticulum membrane. The protein localises to the golgi apparatus membrane. Involved in the early part of the secretory pathway. This Saccharomyces cerevisiae (strain ATCC 204508 / S288c) (Baker's yeast) protein is Protein Kish.